A 416-amino-acid polypeptide reads, in one-letter code: Pre-mRNA-splicing factor slu-7 (416 aa).

The interval 1–34 (MPPPPPNRREQATAAPSSTDKSETGAGAARKEDN) is disordered. A CCHC-type zinc finger spans residues 95–112 (GACENCGAMGHKKKDCLE). Composition is skewed to basic and acidic residues over residues 168–179 (RRALQGDQKTPD) and 188–213 (DDKS…QSMR). The segment at 168 to 213 (RRALQGDQKTPDGEGADGPEDDKSGFKYDEESDMGRDRATTKQSMR) is disordered.

This sequence belongs to the SLU7 family. Associated with the spliceosome.

It is found in the nucleus. Its function is as follows. Involved in pre-mRNA splicing. This is Pre-mRNA-splicing factor slu-7 (slu-7) from Neurospora crassa (strain ATCC 24698 / 74-OR23-1A / CBS 708.71 / DSM 1257 / FGSC 987).